The primary structure comprises 153 residues: Large ribosomal subunit protein uL30 (153 aa).

The protein belongs to the universal ribosomal protein uL30 family. As to quaternary structure, part of the 50S ribosomal subunit.

This is Large ribosomal subunit protein uL30 from Methanospirillum hungatei JF-1 (strain ATCC 27890 / DSM 864 / NBRC 100397 / JF-1).